The chain runs to 115 residues: Non-specific lipid-transfer protein Cw18 (115 aa).

The N-terminal stretch at 1–25 is a signal peptide; the sequence is MARTAATKLALVALVAAMLLVAADA. 4 disulfide bridges follow: cysteine 29-cysteine 77, cysteine 39-cysteine 54, cysteine 55-cysteine 97, and cysteine 75-cysteine 111.

Belongs to the plant LTP family. As to expression, highly expressed in leaves and coleoptiles. No expression in roots.

Plant non-specific lipid-transfer proteins transfer phospholipids as well as galactolipids across membranes. May play a role in wax or cutin deposition in the cell walls of expanding epidermal cells and certain secretory tissues. The protein is Non-specific lipid-transfer protein Cw18 (CW18) of Hordeum vulgare (Barley).